The sequence spans 871 residues: Protein translocase subunit SecA (871 aa).

ATP is bound by residues Gln80, 98–102 (GEGKT), and Asp537.

Belongs to the SecA family. Monomer and homodimer. Part of the essential Sec protein translocation apparatus which comprises SecA, SecYEG and auxiliary proteins SecDF. Other proteins may also be involved. A single SecA monomer interacts with SecY in the channel.

Its subcellular location is the cell inner membrane. It localises to the cytoplasm. The enzyme catalyses ATP + H2O + cellular proteinSide 1 = ADP + phosphate + cellular proteinSide 2.. In terms of biological role, part of the Sec protein translocase complex. Interacts with the SecYEG preprotein conducting channel. Has a central role in coupling the hydrolysis of ATP to the transfer of proteins into and across the cell membrane, serving as an ATP-driven molecular motor driving the stepwise translocation of polypeptide chains across the membrane. This chain is Protein translocase subunit SecA, found in Thermotoga maritima (strain ATCC 43589 / DSM 3109 / JCM 10099 / NBRC 100826 / MSB8).